A 688-amino-acid chain; its full sequence is Glycine--tRNA ligase beta subunit (688 aa).

This sequence belongs to the class-II aminoacyl-tRNA synthetase family. As to quaternary structure, tetramer of two alpha and two beta subunits.

It localises to the cytoplasm. It carries out the reaction tRNA(Gly) + glycine + ATP = glycyl-tRNA(Gly) + AMP + diphosphate. This Shewanella oneidensis (strain ATCC 700550 / JCM 31522 / CIP 106686 / LMG 19005 / NCIMB 14063 / MR-1) protein is Glycine--tRNA ligase beta subunit.